Consider the following 180-residue polypeptide: PLASMODESMATA CALLOSE-BINDING PROTEIN 5 (180 aa).

A signal peptide spans 1 to 29 (MIMSLPQCSHLRLSILAATAAMLMVITTA). Cysteines 42 and 105 form a disulfide. The tract at residues 126–151 (PSSKGANNGRLADDTSMGAGQADMSR) is disordered. A lipid anchor (GPI-anchor amidated serine) is attached at S157. Positions 158 to 180 (SSWMVTFIGFGSLLTMTWIIHHL) are cleaved as a propeptide — removed in mature form.

Post-translationally, contains two additional disulfide bonds.

The protein resides in the cell membrane. The protein localises to the cell junction. It is found in the plasmodesma. The polypeptide is PLASMODESMATA CALLOSE-BINDING PROTEIN 5 (PDCB5) (Arabidopsis thaliana (Mouse-ear cress)).